The following is a 163-amino-acid chain: ATP synthase subunit b' (163 aa).

Residues 28-45 (LMAIQFLLLALILNATLY) traverse the membrane as a helical segment.

Belongs to the ATPase B chain family. F-type ATPases have 2 components, F(1) - the catalytic core - and F(0) - the membrane proton channel. F(1) has five subunits: alpha(3), beta(3), gamma(1), delta(1), epsilon(1). F(0) has four main subunits: a(1), b(1), b'(1) and c(10-14). The alpha and beta chains form an alternating ring which encloses part of the gamma chain. F(1) is attached to F(0) by a central stalk formed by the gamma and epsilon chains, while a peripheral stalk is formed by the delta, b and b' chains.

The protein resides in the cellular thylakoid membrane. Its function is as follows. F(1)F(0) ATP synthase produces ATP from ADP in the presence of a proton or sodium gradient. F-type ATPases consist of two structural domains, F(1) containing the extramembraneous catalytic core and F(0) containing the membrane proton channel, linked together by a central stalk and a peripheral stalk. During catalysis, ATP synthesis in the catalytic domain of F(1) is coupled via a rotary mechanism of the central stalk subunits to proton translocation. Functionally, component of the F(0) channel, it forms part of the peripheral stalk, linking F(1) to F(0). The b'-subunit is a diverged and duplicated form of b found in plants and photosynthetic bacteria. In Nostoc sp. (strain PCC 7120 / SAG 25.82 / UTEX 2576), this protein is ATP synthase subunit b'.